A 134-amino-acid chain; its full sequence is Protein dpy-30 homolog (134 aa).

Residues 1 to 81 (MEAKTDAPIS…ETNNMPTRQY (81 aa)) form a disordered region. Residues 31 to 68 (AQANPTAAPGAPPSGAIAVGQSTNPVAQQQQQPAVAKK) show a composition bias toward low complexity. Polar residues predominate over residues 71–81 (SETNNMPTRQY).

The protein belongs to the dpy-30 family. As to quaternary structure, core component of several methyltransferase-containing complexes. Component of the SET1 complex, composed at least of the catalytic subunit Set1, wds/WDR5, Wdr82, Rbbp5, ash2, Cfp1/CXXC1, hcf and Dpy-30L1. Component of the MLL3/4 complex composed at least of the catalytic subunit trr, ash2, Rbbp5, Dpy-30L1, wds, hcf, ptip, Pa1, Utx, Lpt and Ncoa6. In terms of tissue distribution, expressed in larval brain, gonad, imaginal disk and salivary gland and in adult brain, testis, ovary and salivary gland.

The protein localises to the nucleus. Component of the SET1 complex that specifically di- and trimethylates 'Lys-4' of histone H3 and of the MLL3/4 complex which also methylates histone H3 'Lys-4'. Inhibits MTF-1 transcription factor activity. This Drosophila melanogaster (Fruit fly) protein is Protein dpy-30 homolog.